The following is a 205-amino-acid chain: Ribosomal RNA small subunit methyltransferase G (205 aa).

Residues Gly73, Leu78, 124-125, and Arg139 each bind S-adenosyl-L-methionine; that span reads VE.

It belongs to the methyltransferase superfamily. RNA methyltransferase RsmG family.

It is found in the cytoplasm. It carries out the reaction guanosine(527) in 16S rRNA + S-adenosyl-L-methionine = N(7)-methylguanosine(527) in 16S rRNA + S-adenosyl-L-homocysteine. In terms of biological role, specifically methylates the N7 position of guanine in position 527 of 16S rRNA. In Methylobacillus flagellatus (strain ATCC 51484 / DSM 6875 / VKM B-1610 / KT), this protein is Ribosomal RNA small subunit methyltransferase G.